The primary structure comprises 319 residues: Olfactory receptor 10Q1 (319 aa).

Residues 1–29 (MPVGKLVFNQSEPTEFVFRAFTTATEFQV) lie on the Extracellular side of the membrane. N9 carries N-linked (GlcNAc...) asparagine glycosylation. The chain crosses the membrane as a helical span at residues 30-50 (LLFLLFLLLYLMILCGNTAII). Over 51 to 58 (WVVCTHST) the chain is Cytoplasmic. The helical transmembrane segment at 59 to 79 (LRTPMYFFLSNLSFLELCYTT) threads the bilayer. The Extracellular portion of the chain corresponds to 80-103 (VVVPLMLSNILGAQKPISLAGCGA). A disulfide bridge connects residues C101 and C194. Residues 104-124 (QMFFFVTLGSTDCFLLAIMAY) form a helical membrane-spanning segment. The Cytoplasmic segment spans residues 125–143 (DRYVAICHPLHYTLIMTRE). Residues 144 to 164 (LCTQMLGGALGLALFPSLQLT) form a helical membrane-spanning segment. At 165-202 (ALIFTLPFCGHHQEINHFLCDVPPVLRLACADIRVHQA) the chain is on the extracellular side. A helical membrane pass occupies residues 203-222 (VLYVVSILVLTIPFLLICVS). Topologically, residues 223-242 (YVFITCAILSIRSAEGRRRA) are cytoplasmic. A helical transmembrane segment spans residues 243–263 (FSTCSFHLTVVLLQYGCCSLV). The Extracellular segment spans residues 264–276 (YLRPRSSTSEDED). The chain crosses the membrane as a helical span at residues 277-297 (SQIALVYTFVTPLLNPLLYSL). Over 298 to 319 (RNKDVKGALRSAIIRKAASDAN) the chain is Cytoplasmic.

Belongs to the G-protein coupled receptor 1 family.

The protein resides in the cell membrane. Odorant receptor. This is Olfactory receptor 10Q1 (OR10Q1) from Homo sapiens (Human).